The following is a 313-amino-acid chain: Ras-related GTP-binding protein A (313 aa).

Residues S16, G17, G19, K20, T21, S22, T36, T42, G65, and H127 each contribute to the GTP site. Positions 17, 19, 20, 21, and 22 each coordinate GDP. GDP is bound by residues H127 and D130. K142 participates in a covalent cross-link: Glycyl lysine isopeptide (Lys-Gly) (interchain with G-Cter in ubiquitin). L148 and I164 together coordinate GDP. I164 serves as a coordination point for GTP. Glycyl lysine isopeptide (Lys-Gly) (interchain with G-Cter in ubiquitin) cross-links involve residues K220, K230, and K244. S309 carries the phosphoserine modification.

It belongs to the GTR/RAG GTP-binding protein family. Can occur as a homodimer or as a heterodimer with RRAGC or RRAGD in a sequence-independent manner; heterodimerization stabilizes proteins of the heterodimer. The GTP-bound form of RRAGA (in complex with the GDP-bound form of RRAGC or RRAGD) interacts with RPTOR, thereby promoting recruitment of mTORC1 to the lysosomes. The Rag heterodimer interacts with SLC38A9; the probable amino acid sensor. The Rag heterodimer interacts with the Ragulator complex. The GTP-bound form of RRAGA interacts with NOL8. Component of the lysosomal folliculin complex (LFC), composed of FLCN, FNIP1 (or FNIP2), RagA/RRAGA or RagB/RRAGB GDP-bound, RagC/RRAGC or RagD/RRAGD GTP-bound, and Ragulator. Interacts with SH3BP4; the interaction with this negative regulator is most probably direct, preferentially occurs with the inactive GDP-bound form of RRAGA and is negatively regulated by amino acids. Interacts (polyubiquitinated) with TSC2. Interacts with SESN1, SESN2 and SESN3. Interacts with PIP4P1. Interacts with GPR137B. Interacts with WDR83; this interaction regulates the spatiotemporal localization of mTORC1 to the lysosomal surface. Post-translationally, polybiquitinated via 'Lys-63'-linked polyubiquitination by RNF152 in response to amino acid starvation: polyubiquitination of the GDP-bound inactive form by RNF152 promotes RRAGA inactivation and interaction with the GATOR1 complex. This does not affect RRAGA degradation.

The protein localises to the cytoplasm. It is found in the nucleus. It localises to the lysosome membrane. It catalyses the reaction GTP + H2O = GDP + phosphate + H(+). With respect to regulation, the activation of GTP-binding proteins is generally mediated by a guanine exchange factor (GEF), while inactivation through hydrolysis of bound GTP is catalyzed by a GTPase activating protein (GAP). The Ragulator complex functions as a GEF and promotes the active GTP-bound form. The GATOR1 complex functions as a GAP and stimulates RRAGA GTPase activity to turn it into its inactive GDP-bound form, preventing mTORC1 recruitment and activation. Guanine nucleotide-binding protein that plays a crucial role in the cellular response to amino acid availability through regulation of the mTORC1 signaling cascade. Forms heterodimeric Rag complexes with RagC/RRAGC or RagD/RRAGD and cycles between an inactive GDP-bound and an active GTP-bound form: RagA/RRAGA is in its active form when GTP-bound RagA/RRAGA forms a complex with GDP-bound RagC/RRAGC (or RagD/RRAGD) and in an inactive form when GDP-bound RagA/RRAGA heterodimerizes with GTP-bound RagC/RRAGC (or RagD/RRAGD). In its GTP-bound active form, promotes the recruitment of mTORC1 to the lysosomes and its subsequent activation by the GTPase RHEB. Involved in the RCC1/Ran-GTPase pathway. May play a direct role in a TNF-alpha signaling pathway leading to induction of cell death. This is Ras-related GTP-binding protein A from Bos taurus (Bovine).